Here is a 369-residue protein sequence, read N- to C-terminus: Phenylalanine--tRNA ligase alpha subunit (369 aa).

Glu-269 contributes to the Mg(2+) binding site.

Belongs to the class-II aminoacyl-tRNA synthetase family. Phe-tRNA synthetase alpha subunit type 1 subfamily. Tetramer of two alpha and two beta subunits. The cofactor is Mg(2+).

Its subcellular location is the cytoplasm. It carries out the reaction tRNA(Phe) + L-phenylalanine + ATP = L-phenylalanyl-tRNA(Phe) + AMP + diphosphate + H(+). This is Phenylalanine--tRNA ligase alpha subunit from Brucella anthropi (strain ATCC 49188 / DSM 6882 / CCUG 24695 / JCM 21032 / LMG 3331 / NBRC 15819 / NCTC 12168 / Alc 37) (Ochrobactrum anthropi).